A 66-amino-acid polypeptide reads, in one-letter code: MDHSLNSLNNFDFLARSFARMHAEGRPVDILAVTGNMDEEHRTWFCARYAWYCQQMMQTRELELEH.

It belongs to the GlgS family.

Its function is as follows. Major determinant of cell surface composition. Negatively regulates motility, adhesion and synthesis of biofilm exopolysaccharides. This is Surface composition regulator from Escherichia coli O127:H6 (strain E2348/69 / EPEC).